We begin with the raw amino-acid sequence, 518 residues long: Nitrogenase iron-iron protein alpha chain (518 aa).

Residues Cys-49 and Cys-75 each contribute to the [8Fe-7S] cluster site. Positions 257 and 423 each coordinate [8Fe-9S-C-homocitryl] cluster.

As to quaternary structure, hexamer of two alpha, two beta, and two delta chains. It depends on [8Fe-7S] cluster as a cofactor. [8Fe-9S-C-homocitryl] cluster serves as cofactor.

The catalysed reaction is N2 + 8 reduced [2Fe-2S]-[ferredoxin] + 16 ATP + 16 H2O = H2 + 8 oxidized [2Fe-2S]-[ferredoxin] + 2 NH4(+) + 16 ADP + 16 phosphate + 6 H(+). Functionally, this iron-iron protein is part of the nitrogenase complex that catalyzes the key enzymatic reactions in nitrogen fixation. Other nitrogenase complexes utilize a molybdenum-iron protein or a vanadium-iron protein. This chain is Nitrogenase iron-iron protein alpha chain (anfD), found in Ruminiclostridium hungatei (Clostridium hungatei).